The chain runs to 341 residues: Ribose-phosphate pyrophosphokinase 5 (341 aa).

The Mg(2+) site is built by Asp152, His154, and Asp167.

The protein belongs to the ribose-phosphate pyrophosphokinase family.

The protein resides in the cytoplasm. The catalysed reaction is D-ribose 5-phosphate + ATP = 5-phospho-alpha-D-ribose 1-diphosphate + AMP + H(+). Its pathway is metabolic intermediate biosynthesis; 5-phospho-alpha-D-ribose 1-diphosphate biosynthesis; 5-phospho-alpha-D-ribose 1-diphosphate from D-ribose 5-phosphate (route I): step 1/1. 5-phosphoribose 1-diphosphate synthase involved in nucleotide, histidine, and tryptophan biosynthesis. Active in heteromultimeric complexes with other 5-phosphoribose 1-diphosphate synthases. The chain is Ribose-phosphate pyrophosphokinase 5 from Schizosaccharomyces pombe (strain 972 / ATCC 24843) (Fission yeast).